We begin with the raw amino-acid sequence, 253 residues long: Distal tail protein (253 aa).

In terms of assembly, homohexamer.

The protein resides in the virion. Its function is as follows. Forms a 40 Angstroms wide channel at the distal tip of the tail. Remains associated to the tail after DNA ejection. The protein is Distal tail protein of Bacillus phage SPP1 (Bacteriophage SPP1).